A 583-amino-acid chain; its full sequence is Laccase-21 (583 aa).

Positions Met1–Gly29 are cleaved as a signal peptide. 2 consecutive Plastocyanin-like domains span residues Phe39–Gly155 and Lys165–Gly323. The N-linked (GlcNAc...) asparagine glycan is linked to Asn85. The Cu cation site is built by His89, His91, His134, and His136. Asn282, Asn311, Asn384, Asn387, Asn399, Asn409, and Asn446 each carry an N-linked (GlcNAc...) asparagine glycan. The Plastocyanin-like 3 domain maps to Phe436–Lys567. Cu cation-binding residues include His484, His487, His489, His546, Cys547, His548, His552, and Met557.

This sequence belongs to the multicopper oxidase family. Requires Cu cation as cofactor.

The protein resides in the secreted. It localises to the extracellular space. It is found in the apoplast. The enzyme catalyses 4 hydroquinone + O2 = 4 benzosemiquinone + 2 H2O. Lignin degradation and detoxification of lignin-derived products. The polypeptide is Laccase-21 (LAC21) (Oryza sativa subsp. japonica (Rice)).